The sequence spans 150 residues: Ribosome maturation factor RimP (150 aa).

It belongs to the RimP family.

Its subcellular location is the cytoplasm. Functionally, required for maturation of 30S ribosomal subunits. This Acidithiobacillus ferrooxidans (strain ATCC 23270 / DSM 14882 / CIP 104768 / NCIMB 8455) (Ferrobacillus ferrooxidans (strain ATCC 23270)) protein is Ribosome maturation factor RimP.